The sequence spans 255 residues: Ribonuclease HII (255 aa).

Residues 72 to 255 enclose the RNase H type-2 domain; it reads QYIAGIDEAG…RSFAPVKAHE (184 aa). The a divalent metal cation site is built by aspartate 78, glutamate 79, and aspartate 170.

It belongs to the RNase HII family. Requires Mn(2+) as cofactor. The cofactor is Mg(2+).

It localises to the cytoplasm. The catalysed reaction is Endonucleolytic cleavage to 5'-phosphomonoester.. Endonuclease that specifically degrades the RNA of RNA-DNA hybrids. This chain is Ribonuclease HII, found in Bacillus licheniformis (strain ATCC 14580 / DSM 13 / JCM 2505 / CCUG 7422 / NBRC 12200 / NCIMB 9375 / NCTC 10341 / NRRL NRS-1264 / Gibson 46).